Reading from the N-terminus, the 424-residue chain is Histidine--tRNA ligase (424 aa).

Belongs to the class-II aminoacyl-tRNA synthetase family. As to quaternary structure, homodimer.

It is found in the cytoplasm. It catalyses the reaction tRNA(His) + L-histidine + ATP = L-histidyl-tRNA(His) + AMP + diphosphate + H(+). This is Histidine--tRNA ligase from Bacillus velezensis (strain DSM 23117 / BGSC 10A6 / LMG 26770 / FZB42) (Bacillus amyloliquefaciens subsp. plantarum).